We begin with the raw amino-acid sequence, 393 residues long: Probable acetyl-CoA acetyltransferase (393 aa).

Cys-88 functions as the Acyl-thioester intermediate in the catalytic mechanism. Catalysis depends on proton acceptor residues His-349 and Cys-379.

It belongs to the thiolase-like superfamily. Thiolase family.

The catalysed reaction is 2 acetyl-CoA = acetoacetyl-CoA + CoA. In Mycobacterium leprae (strain TN), this protein is Probable acetyl-CoA acetyltransferase (fadA4).